Reading from the N-terminus, the 372-residue chain is Ligninase B (372 aa).

Positions Met1–Ala21 are cleaved as a signal peptide. A propeptide spanning residues Ala22–Arg28 is cleaved from the precursor. Disulfide bonds link Cys31–Cys43, Cys42–Cys313, Cys62–Cys148, and Cys277–Cys345. His75 serves as the catalytic Proton acceptor. Asp76, Gly94, Asp96, and Ser98 together coordinate Ca(2+). His204 is a binding site for heme b. Ser205, Asp222, Thr224, Ile227, and Asp229 together coordinate Ca(2+). A glycan (N-linked (GlcNAc...) asparagine) is linked at Asn285. The span at Phe350–Thr361 shows a compositional bias: low complexity. A disordered region spans residues Phe350–Ala372.

This sequence belongs to the peroxidase family. Ligninase subfamily. The cofactor is heme b. Requires Ca(2+) as cofactor.

The catalysed reaction is 1-(3,4-dimethoxyphenyl)-2-(2-methoxyphenoxy)propane-1,3-diol + H2O2 = 3,4-dimethoxybenzaldehyde + guaiacol + glycolaldehyde + H2O. It catalyses the reaction 2 (3,4-dimethoxyphenyl)methanol + H2O2 = 2 (3,4-dimethoxyphenyl)methanol radical + 2 H2O. Its pathway is secondary metabolite metabolism; lignin degradation. Depolymerization of lignin. Catalyzes the C(alpha)-C(beta) cleavage of the propyl side chains of lignin. The sequence is that of Ligninase B (LIPB) from Phanerodontia chrysosporium (White-rot fungus).